Reading from the N-terminus, the 407-residue chain is Protein ORF45 (407 aa).

Polar residues predominate over residues 1–10; it reads MAMFVRTSSS. 3 disordered regions span residues 1 to 183, 196 to 318, and 332 to 407; these read MAMF…SDDE, GTGA…QRQP, and SSGS…PWLD. Ser-41 bears the Phosphoserine; by host TBK1 and IKKE mark. The segment covering 91 to 115 has biased composition (acidic residues); the sequence is SEYDEDEEDEDEEENDDVQEEDEPE. Positions 128-139 are enriched in basic residues; it reads LRPRPLARRAHT. At Ser-162 the chain carries Phosphoserine; by host TBK1 and IKKE. The segment covering 205-218 has biased composition (polar residues); the sequence is ASRNSVPGTQSSPY. Residues 284–294 carry the Nuclear export signal motif; it reads VLSQRIGLMDV. Positions 297 to 300 match the Nuclear localization signal motif; sequence KRKR. Composition is skewed to low complexity over residues 342–353 and 360–383; these read SSAVSVIVSPSS and TQSPSTSAHSISSGSTTTAGSRCS.

Interacts with host IRF7. Interacts with host RPS6KA1. Interacts with host RAB11FIP5; this interaction results in the lysosomal degradation of ORF45 and the inhibition of viral particle release. Interacts with host p53/TP53; this interaction down-regulates p53/TP53 signaling pathway. Interacts with the N-terminal part of host NLRP1; relieving autoinhibition of the NLRP1 inflammasome. Post-translationally, phosphorylated on Ser-41 and Ser-162 by host IKBKE and TBK1.

The protein resides in the virion tegument. Its subcellular location is the host cytoplasm. It localises to the host nucleus. The protein localises to the host Golgi apparatus. Its function is as follows. Prevents the establishment of cellular antiviral state by blocking virus-induced phosphorylation and activation of host interferon regulatory factor 7/IRF7, a transcription factor critical for the induction of interferons alpha and beta. Mechanistically, ORF45 competes with the associated IRF7 and inhibits its phosphorylation by IKBKE or TBK1 by acting as an alternative substrate. Acts as an activator of the NLRP1 inflammasome via interaction with the N-terminal part of host NLRP1: interaction promotes translocation of the N-terminal part of NLRP1 into the nucleus, relieving autoinhibition of the NLRP1 inflammasome and leading to its activation. Also plays a role in promoting the late transcription and translation of viral lytic genes by constitutively activating host extracellular signal-regulated kinase (ERK)-p90 ribosomal S6 kinase/RPS6KA1. In addition, supports the viral replication cycle by modulating host p53/TP53 signaling pathway. Interacts with host p53/TP53 and prevents its interaction with the deubiquitinase USP7, leading to sequestration of P53/TP53 in the host cytoplasm thereby diminishing its transcriptional activity. This is Protein ORF45 (ORF45) from Homo sapiens (Human).